The sequence spans 975 residues: 5'-3' exoribonuclease 2 homolog (975 aa).

The CCHC-type zinc-finger motif lies at 262–279 (RACDLCGQYGHELKECRG). 2 disordered regions span residues 424–443 (MQMY…GRGQ) and 505–532 (SPAD…EGPK). The interaction with paxt-1 stretch occupies residues 534–787 (DIRLYESGWK…GICVLYEDPE (254 aa)). Basic and acidic residues predominate over residues 804–821 (EPEKTLKPDDWNDRRDGR). A disordered region spans residues 804–975 (EPEKTLKPDD…GGYHGNSSWR (172 aa)). 3 stretches are compositionally biased toward gly residues: residues 850–860 (RGGGGGGGGYR), 886–895 (NYGGRDGGGP), and 908–932 (GYQG…GGGS).

This sequence belongs to the 5'-3' exonuclease family. XRN2/RAT1 subfamily. In terms of assembly, interacts with paxt-1 (via N-terminus); the interaction is direct and results in stabilization of xrn-2 in the complex. Expressed in the pharyngeal myoepithelium and intestine. Also expressed in several anterior neurons including the sensory neurons, as well as the interneuron PVT and the pharyngeal motorneuron M5.

It localises to the nucleus. Possesses 5'-&gt;3' exoribonuclease activity. Plays a role in maintenance of steady-state concentration and turnover of microRNAs (miRNA) by degradation of mature miRNA. Degradation role is enhanced when in complex with paxt-1. Partially redundant to xrn-1 in miRNA guide strand degradation. Implicated in differential regulation of mRNAs such as let-7 by controlling the accumulation of mature miRNA. Positively regulates molting of the pharyngeal cuticle. This is 5'-3' exoribonuclease 2 homolog from Caenorhabditis elegans.